The primary structure comprises 263 residues: Acetylglutamate kinase (263 aa).

Substrate is bound by residues 48-49 (GG), Arg-70, and Asn-162.

Belongs to the acetylglutamate kinase family. ArgB subfamily.

Its subcellular location is the cytoplasm. The catalysed reaction is N-acetyl-L-glutamate + ATP = N-acetyl-L-glutamyl 5-phosphate + ADP. Its pathway is amino-acid biosynthesis; L-arginine biosynthesis; N(2)-acetyl-L-ornithine from L-glutamate: step 2/4. Functionally, catalyzes the ATP-dependent phosphorylation of N-acetyl-L-glutamate. The protein is Acetylglutamate kinase of Vibrio vulnificus (strain CMCP6).